A 387-amino-acid chain; its full sequence is DNA-damage-repair/toleration protein 111 (387 aa).

The disordered stretch occupies residues 1–213 (MLGGLYGDLP…TSGLGVGAGG (213 aa)). Over residues 19-29 (SGNSSSVWSSS) the composition is skewed to low complexity. The span at 103–158 (DPARPNDYEEYKREKKRKATEAEMKREMDKRRQEDEERDKREREEREKERERDNSD) shows a compositional bias: basic and acidic residues. The region spanning 214–260 (QMTAAQRMMAKMGWKQGQGLGKSEQGITTPLMAKKTDRRAGVIVNAS) is the G-patch domain. The RRM domain occupies 283 to 369 (RVLLLRNMVG…RTVRATFYDE (87 aa)).

Component of the SWAP1-SFPS-RRC1 splicing factor complex which modulates pre-mRNA splicing to promote photomorphogenesis. Interacts with SWAP1 in a light-independent manner. Associates with the photoreceptor phytochrome B (phyB) in nuclear photobodies upon response to red light. Binds to the splicing factor 1 SF1, involved in 3' splicing site recognition. Expressed ubiquitously with highest levels in dry seeds and in cells surrounding the base of trichomes and guard cells.

The protein localises to the nucleus. It localises to the nucleus speckle. Its function is as follows. As a member of the SWAP1-SFPS-RRC1 splicing factor complex, modulates photomorphogenesis by regulating the gene expression and pre-messenger RNA (mRNA) alternative splicing of a large number of genes, including those involved in plant responses to light signaling, probably by helping in the 3' splice site determination. Associates with and regulates EARLY FLOWERING 3 (ELF3) mRNA processing, a key component of the circadian clock also involved in photomorphogenesis. Required for light-regulated (red, far-red and blue lights) photomorphogenesis in a PHYB- and PHYTOCHROME INTERACTING FACTORS- (PIFs) dependent manner. Promotes flowering under both short (SD) and long days (LD). Controls abscisic acid (ABA) sensitivity during seed development, stomatal responsiveness and germination by monitoring ABI3 splicing, upstream of the splicing factor SUPPRESSOR OF ABI3-ABI5. Seems to be involved in the resistance to UV light and chemical DNA-damaging agents. The polypeptide is DNA-damage-repair/toleration protein 111 (Arabidopsis thaliana (Mouse-ear cress)).